Here is a 343-residue protein sequence, read N- to C-terminus: Transmembrane protein 120A (343 aa).

The Cytoplasmic portion of the chain corresponds to 1–132 (MQPPPPGPLG…KQAKFAYKDE (132 aa)). CoA is bound at residue Lys-130. Residues 133 to 152 (YEKFKLYLTIILILISFTCR) form a helical membrane-spanning segment. Topologically, residues 153–158 (FLLNSR) are extracellular. The chain crosses the membrane as a helical span at residues 159–177 (VTDAAFNFLLVWYYCTLTI). Topologically, residues 178–190 (RESILINNGSRIK) are cytoplasmic. CoA contacts are provided by Ser-187 and Arg-188. A helical transmembrane segment spans residues 191–209 (GWWVFHHYVSTFLSGVMLT). Over 210 to 218 (WPDGLMYQK) the chain is Extracellular. Residues 219–240 (FRNQFLSFSMYQSFVQFLQYYY) form a helical membrane-spanning segment. 4 residues coordinate CoA: Gln-237, Tyr-240, Gln-241, and His-283. The Cytoplasmic segment spans residues 241-270 (QSGCLYRLRALGERHTMDLTVEGFQSWMWR). Residues 271-294 (GLTFLLPFLFFGHFWQLFNALTLF) traverse the membrane as a helical segment. Residues 295 to 304 (NLAQDPQCKE) are Extracellular-facing. Residues 305–330 (WQVLMCGFPFLLLFLGNFFTTLRVVH) traverse the membrane as a helical segment. Topologically, residues 331-343 (HKFHSQRHGSKKD) are cytoplasmic. Lys-332 is a binding site for CoA.

Belongs to the TMEM120 family. In terms of assembly, homodimer. Forms heterooligomer with TMEM120B. Interacts with PKD2; TMEM120A inhibits PKD2 channel activity through the physical association of PKD2 with TMEM120A. Interacts (via C-terminal domain) with STING1; regulates the trafficking of STING1 from the ER to the ER-Golgi intermediate compartment to elicit antiviral effects. Expressed in nociceptors.

The protein resides in the cell membrane. The protein localises to the nucleus inner membrane. Its subcellular location is the endoplasmic reticulum. Functionally, multifunctional protein involved in mechanosensation, and plays an essential role in lipid metabolism and adipocyte differentiation. May function as a potential ion channel involved in sensing mechanical stimuli. Mediates the mechanosensitivity of the PKD2-TMEM120A channel complex through direct physical interaction. TMEM120A seems to affect mechanosensation by inhibiting PIEZO2 channels, possibly by altering cellular lipid content. TMEM120A is structurally similar to a lipid-modifying enzyme, ELOVL7, and contains a bound coenzyme A molecule, which suggests it might function as an enzyme in lipid metabolism. Additionnaly, implicated in innate immune response against Zika virus. Acts as a key activator of the antiviral signaling involving STING1. This is Transmembrane protein 120A from Homo sapiens (Human).